A 314-amino-acid polypeptide reads, in one-letter code: NF-kappa-B inhibitor alpha (314 aa).

The interval 1–41 (MFQPAEPGQEWAMEGPRDALKKERLLDDRHDSGLDSMKDEE) is disordered. Residues 15 to 41 (GPRDALKKERLLDDRHDSGLDSMKDEE) are compositionally biased toward basic and acidic residues. Residue Lys21 forms a Glycyl lysine isopeptide (Lys-Gly) (interchain with G-Cter in SUMO); alternate linkage. Lys21 is covalently cross-linked (Glycyl lysine isopeptide (Lys-Gly) (interchain with G-Cter in ubiquitin); alternate). A Glycyl lysine isopeptide (Lys-Gly) (interchain with G-Cter in ubiquitin) cross-link involves residue Lys22. A Destruction motif motif is present at residues 30–36 (HDSGLDS). Ser32 is subject to Phosphoserine; by IKKA and IKKB. Ser36 is modified (phosphoserine; by IKKA, IKKB, IKKE and TBK1). Phosphotyrosine; by Tyr-kinases is present on Tyr42. The Nuclear export signal signature appears at 45-54 (MVKELREIRL). The Nuclear import signal signature appears at 110-120 (LQQTPLHLAVI). ANK repeat units lie at residues 110–139 (LQQTPLHLAVITNQPEIAEALLEAGCDPEL), 143–172 (RGNTPLHLACEQGCLASVGVLTQPRGTQHL), 182–211 (NGHTCLHLASIHGYLGIVELLVSLGADVNA), and 216–245 (NGRTALHLAVDLQNPDLVSLLLKCGADVNR). (3S)-3-hydroxyasparagine; by HIF1AN is present on residues Asn210 and Asn244. Residues Ser283 and Ser288 each carry the phosphoserine; by CK2 modification. Residue Thr291 is modified to Phosphothreonine; by CK2. Phosphoserine; by CK2 is present on Ser293. Thr296 carries the post-translational modification Phosphothreonine.

It belongs to the NF-kappa-B inhibitor family. As to quaternary structure, interacts with RELA; the interaction requires the nuclear import signal. Part of a 70-90 kDa complex at least consisting of CHUK, IKBKB, NFKBIA, RELA, ELP1 and MAP3K14. Interacts with NKIRAS1 and NKIRAS2. Interacts with RWDD3; the interaction enhances sumoylation. Interacts with PRMT2. Interacts with PRKACA in platelets; this interaction is disrupted by thrombin and collagen. Interacts with MEFV. Interacts with DDRGK1; positively regulates NFKBIA phosphorylation and degradation. Interacts with HNRNPA2B1; the interaction may be mediated by the RRM2 domain of HNRNPA2B1, and HNRNPA2B1 may interact simultaneously with FAM76B and either NFKBIA or NFKBIE to form a complex. Phosphorylated at Ser-32 and Ser-36 by IKKA/CHUK and IKKB/IKBKB; disables inhibition of NF-kappa-B DNA-binding activity. Phosphorylation at positions 32 and 36 is prerequisite to recognition by the SCF(FBXW11) and SCF(BTRC) complexes, leading to polyubiquitination and subsequent degradation. Post-translationally, polyubiquitinated at Lys-21 and/or Lys-22 following phosphorylation at Ser-32 and Ser-36. Monoubiquitinated at Lys-21 and/or Lys-22 by UBE2D3. Ubiquitin chain elongation is then performed by CDC34 in cooperation with the SCF(FBXW11) E3 ligase complex, building ubiquitin chains from the UBE2D3-primed NFKBIA-linked ubiquitin. The resulting polyubiquitination leads to protein degradation. Also ubiquitinated by the SCF(BTRC) complex following stimulus-dependent phosphorylation at Ser-32 and Ser-36. Deubiquitinated by USP38, leading to NF-kappa-B inhibition. In terms of processing, sumoylated; sumoylation requires the presence of the nuclear import signal. Sumoylation blocks ubiquitination and proteasome-mediated degradation of the protein thereby increasing the protein stability. Hydroxylated by HIF1AN.

The protein resides in the cytoplasm. Its subcellular location is the nucleus. Functionally, inhibits the activity of dimeric NF-kappa-B/REL complexes by trapping REL (RELA/p65 and NFKB1/p50) dimers in the cytoplasm by masking their nuclear localization signals. On cellular stimulation by immune and pro-inflammatory responses, becomes phosphorylated promoting ubiquitination and degradation, enabling the dimeric RELA to translocate to the nucleus and activate transcription. This is NF-kappa-B inhibitor alpha (NFKBIA) from Sus scrofa (Pig).